A 709-amino-acid chain; its full sequence is Kelch domain-containing protein STK_09390 (709 aa).

The signal sequence occupies residues 1 to 22; sequence MKRNTLLALVLVILIFPTLSTA. 6 Kelch repeats span residues 49–94, 96–140, 141–192, 193–240, 242–288, and 290–340; these read KIFL…VCNN, LYVV…SYDY, KIYV…FNGS, ALFV…YYNG, MYLV…VQIG, and KLII…DTNA. Fibronectin type-III domains are found at residues 315 to 405, 406 to 488, 489 to 566, and 568 to 643; these read PPPK…VPNP, PIIK…ASKA, NLTV…IYYI, and PASP…NDVR.

This chain is Kelch domain-containing protein STK_09390, found in Sulfurisphaera tokodaii (strain DSM 16993 / JCM 10545 / NBRC 100140 / 7) (Sulfolobus tokodaii).